Here is a 308-residue protein sequence, read N- to C-terminus: Mitochondrial import receptor subunit TOM40B (308 aa).

The tract at residues 1-29 (MGNTLGLAPMGALPRRSPRREEPLPNPGS) is disordered. Residues 281–308 (PLPVTLALGAFLNHWRNRFHCGFSITVG) are required for mitochondrial targeting.

Belongs to the Tom40 family. As to quaternary structure, forms part of the preprotein translocase of the outer mitochondrial membrane (TOM complex) containing TOMM22, TOMM40, TOMM40L and TOMM70. Interacts with mitochondrial targeting sequences.

The protein resides in the mitochondrion outer membrane. Potential channel-forming protein implicated in import of protein precursors into mitochondria. This Bos taurus (Bovine) protein is Mitochondrial import receptor subunit TOM40B.